Consider the following 334-residue polypeptide: Serine/Arginine-related protein 53 (334 aa).

The span at 1–13 (MGRRSSDTEEESR) shows a compositional bias: basic and acidic residues. 3 disordered regions span residues 1–179 (MGRR…HLPP), 201–220 (LKAKERNEEEAKRRKEEDQA), and 243–290 (QTFR…SIPT). 2 stretches are compositionally biased toward basic residues: residues 14–24 (SKRKKKHRRRS) and 35–50 (YSRKKGGRKSRSKSRS). The segment covering 51–62 (WSRDLQPRSHSY) has biased composition (basic and acidic residues). Over residues 78-118 (SRRKRSRSRSRGRGKSYRVQRSRSKSRTRRSRSRPRLRSHS) the composition is skewed to basic residues. Composition is skewed to basic and acidic residues over residues 132 to 166 (RSRDRERRKGRDKEKREKEKDKGKDKELHNIKRGE), 201 to 218 (LKAKERNEEEAKRRKEED), and 247 to 259 (SSKEVKKSVEPSE). Residues 180–236 (AEQAKARLQLVLEAAAKADEALKAKERNEEEAKRRKEEDQATLVEQVKRVKEIEAIE) adopt a coiled-coil conformation.

As to quaternary structure, interacts (via Arg/Ser-rich domain) with LUC7L3, RBM39 and RSF1. In terms of processing, phosphorylated. Widely expressed. Expressed in brain, spinal cord, cerebellum.

It localises to the nucleus. The protein localises to the nucleus speckle. The protein resides in the cytoplasm. Its function is as follows. Has a role in alternative splicing and transcription regulation. Involved in both constitutive and alternative pre-mRNA splicing. May have a role in the recognition of the 3' splice site during the second step of splicing. The protein is Serine/Arginine-related protein 53 (RSRC1) of Homo sapiens (Human).